The chain runs to 158 residues: MSKKPKVASNTIALNKRARHEYFIEEEIEAGLELQGWEVKSLRAGKANIGDSYVTFRNGEAFLFGGTITPLNVASTHIVCDPTRTRKLLLNKRELDTLYGKVSRDGFTVVALSLYWKNAWAKVKIGLAKGKKLHDKREDIKDREWQVAKQRIMKNANR.

It belongs to the SmpB family.

The protein localises to the cytoplasm. Required for rescue of stalled ribosomes mediated by trans-translation. Binds to transfer-messenger RNA (tmRNA), required for stable association of tmRNA with ribosomes. tmRNA and SmpB together mimic tRNA shape, replacing the anticodon stem-loop with SmpB. tmRNA is encoded by the ssrA gene; the 2 termini fold to resemble tRNA(Ala) and it encodes a 'tag peptide', a short internal open reading frame. During trans-translation Ala-aminoacylated tmRNA acts like a tRNA, entering the A-site of stalled ribosomes, displacing the stalled mRNA. The ribosome then switches to translate the ORF on the tmRNA; the nascent peptide is terminated with the 'tag peptide' encoded by the tmRNA and targeted for degradation. The ribosome is freed to recommence translation, which seems to be the essential function of trans-translation. The chain is SsrA-binding protein from Glaesserella parasuis serovar 5 (strain SH0165) (Haemophilus parasuis).